Consider the following 803-residue polypeptide: Xylosyltransferase sqv-6 (803 aa).

At 3–13 the chain is on the cytoplasmic side; it reads VVGGVNTNYRH. Residues 14-34 traverse the membrane as a helical; Signal-anchor for type II membrane protein segment; sequence YALVIVLFFFLNVYLLYSAQN. Topologically, residues 35 to 803 are lumenal; sequence SVQIRKDEGE…GWDEEARILR (769 aa). Cys63 and Cys91 form a disulfide bridge. Asn95, Asn175, and Asn224 each carry an N-linked (GlcNAc...) asparagine glycan. Intrachain disulfides connect Cys107-Cys446, Cys465-Cys479, and Cys467-Cys477. Residues 115–209 form the WSC domain; sequence IDQRIGCFLD…FNAVEIFRTD (95 aa). UDP-alpha-D-xylose-binding positions include Asp265 and 294–296; that span reads TIW. A glycan (N-linked (GlcNAc...) asparagine) is linked at Asn326. Position 399 to 400 (399 to 400) interacts with UDP-alpha-D-xylose; it reads DW. UDP-alpha-D-xylose contacts are provided by residues Ser480 and 506–507; that span reads RK. N-linked (GlcNAc...) asparagine glycosylation is found at Asn615 and Asn718. Cys769 and Cys775 form a disulfide bridge.

This sequence belongs to the glycosyltransferase 14 family. XylT subfamily. It depends on a divalent metal cation as a cofactor.

It localises to the endoplasmic reticulum membrane. The protein localises to the golgi apparatus membrane. It catalyses the reaction UDP-alpha-D-xylose + L-seryl-[protein] = 3-O-(beta-D-xylosyl)-L-seryl-[protein] + UDP + H(+). The protein operates within glycan metabolism; chondroitin sulfate biosynthesis. It participates in glycan metabolism; heparan sulfate biosynthesis. Its function is as follows. Catalyzes the first step in biosynthesis of glycosaminoglycan. Transfers D-xylose from UDP-D-xylose to specific serine residues of the core protein. The chain is Xylosyltransferase sqv-6 from Caenorhabditis briggsae.